Reading from the N-terminus, the 358-residue chain is MGKFGDFSSICRMAPIPLCASVGPITSIATGVGIEPDCYARNIEVANTIIFQGAASVMHIVALVMTVVMLLHVRGKFTAVGRKEITTFFYLYMILTFLSLCIDAGVIPPHSGSYPYFVAVQAGLASALVTCLVINGFVGFQLYEDGTPLSLWMLRLCSFVAFVISFLVGLATFKSWAGLGPTNTVGIFVVLYFLNALQLLLYVVMQIILVTRTLQDRWPLGDIAFGLFFFIAGQVILYAFSSPICEGISHYLDGLFFATTCNLLAVMMVYKYWDSITKEDLEFSVGTRMNNWEVKELLPQGPEEDRRATVYADPIYEGHYASGPGTGSGASASGYEGGHHRRESHGYTPSPNRQSLRY.

7 consecutive transmembrane segments (helical) span residues 49–69, 88–108, 117–137, 159–179, 185–205, 220–240, and 250–270; these read IIFQ…TVVM, FFYL…GVIP, FVAV…INGF, FVAF…WAGL, VGIF…YVVM, LGDI…LYAF, and HYLD…MMVY. Residues 321 to 358 form a disordered region; the sequence is ASGPGTGSGASASGYEGGHHRRESHGYTPSPNRQSLRY. Positions 347–358 are enriched in polar residues; sequence YTPSPNRQSLRY.

It belongs to the CHS7 family. In terms of assembly, interacts with chs-3.

It is found in the endoplasmic reticulum membrane. Its function is as follows. Chaperone required for the export of the chitin synthase chs-3 from the endoplasmic reticulum. This chain is Chitin synthase export chaperone (csc-1), found in Neurospora crassa (strain ATCC 24698 / 74-OR23-1A / CBS 708.71 / DSM 1257 / FGSC 987).